The sequence spans 456 residues: tRNA modification GTPase MnmE (456 aa).

(6S)-5-formyl-5,6,7,8-tetrahydrofolate contacts are provided by arginine 26, glutamate 86, and arginine 125. One can recognise a TrmE-type G domain in the interval 222–376; the sequence is GLSTAIIGRP…IEDRINQLFF (155 aa). Asparagine 232 contacts K(+). GTP is bound by residues 232 to 237, 251 to 257, and 276 to 279; these read NVGKSS, TDIEGTT, and DTAG. Residue serine 236 participates in Mg(2+) binding. K(+) contacts are provided by threonine 251, isoleucine 253, and threonine 256. Position 257 (threonine 257) interacts with Mg(2+). Lysine 456 lines the (6S)-5-formyl-5,6,7,8-tetrahydrofolate pocket.

It belongs to the TRAFAC class TrmE-Era-EngA-EngB-Septin-like GTPase superfamily. TrmE GTPase family. Homodimer. Heterotetramer of two MnmE and two MnmG subunits. Requires K(+) as cofactor.

The protein resides in the cytoplasm. Functionally, exhibits a very high intrinsic GTPase hydrolysis rate. Involved in the addition of a carboxymethylaminomethyl (cmnm) group at the wobble position (U34) of certain tRNAs, forming tRNA-cmnm(5)s(2)U34. The sequence is that of tRNA modification GTPase MnmE from Streptococcus thermophilus (strain CNRZ 1066).